Here is a 515-residue protein sequence, read N- to C-terminus: MATSTGRWLLLRLALFGFLWEASGGLDSGASRDDDLLLPYPRARARLPRDCTRVRAGNREHESWPPPPATPGAGGLAVRTFVSHFRDRAVAGHLTRAVEPLRTFSVLEPGGPGGCAARRRATVEETARAADCRVAQNGGFFRMNSGECLGNVVSDERRVSSSGGLQNAQFGIRRDGTLVTGYLSEEEVLDTENPFVQLLSGVVWLIRNGSIYINESQATECDETQETGSFSKFVNVISARTAIGHDRKGQLVLFHADGQTEQRGINLWEMAEFLLKQDVVNAINLDGGGSATFVLNGTLASYPSDHCQDNMWRCPRQVSTVVCVHEPRCQPPDCHGHGTCVDGHCQCTGHFWRGPGCDELDCGPSNCSQHGLCTETGCRCDAGWTGSNCSEECPLGWHGPGCQRPCKCEHHCPCDPKTGNCSVSRVKQCLQPPEATLRAGELSFFTRTAWLALTLALAFLLLISTAANLSLLLSRAERNRRLHGDYAYHPLQEMNGEPLAAEKEQPGGAHNPFKD.

The N-terminal stretch at 1-25 (MATSTGRWLLLRLALFGFLWEASGG) is a signal peptide. Residues 26 to 49 (LDSGASRDDDLLLPYPRARARLPR) constitute a propeptide, removed in mature form. Topologically, residues 50 to 448 (DCTRVRAGNR…AGELSFFTRT (399 aa)) are lumenal. Cystine bridges form between C115/C148, C132/C323, C307/C314, C362/C373, and C380/C389. N-linked (GlcNAc...) asparagine glycosylation is found at N208, N214, and N296. In terms of domain architecture, EGF-like spans 358–390 (DELDCGPSNCSQHGLCTETGCRCDAGWTGSNCS). Residues N366, N388, and N420 are each glycosylated (N-linked (GlcNAc...) asparagine). The helical transmembrane segment at 449 to 469 (AWLALTLALAFLLLISTAANL) threads the bilayer. Over 470 to 515 (SLLLSRAERNRRLHGDYAYHPLQEMNGEPLAAEKEQPGGAHNPFKD) the chain is Cytoplasmic. The interval 486 to 493 (YAYHPLQE) is mediates the interaction with AP4M1. The short motif at 488 to 491 (YHPL) is the Tyrosine-based internalization motif element. The NPF internalization motif motif lies at 511 to 515 (NPFKD).

As to quaternary structure, homotetramer arranged as two disulfide-linked homodimers. Interacts with AP4M1. The precursor is cleaved and activated in the trans-Golgi network by a furin endopeptidase. In terms of tissue distribution, isoform 2 may be brain-specific.

It is found in the golgi apparatus. Its subcellular location is the golgi stack membrane. The protein resides in the trans-Golgi network. It carries out the reaction N(4)-[6-(N-acetyl-alpha-D-glucosaminyl-1-phospho)-alpha-D-mannosyl-(1-&gt;2)-alpha-D-mannosyl-(glycan)]-L-asparaginyl-[protein] + H2O = N(4)-[6-phospho-alpha-D-mannosyl-(1-&gt;2)-alpha-D-mannosyl-(glycan)]-L-asparaginyl-[protein] + N-acetyl-D-glucosamine + H(+). It participates in protein modification; protein glycosylation. In terms of biological role, catalyzes the second step in the formation of the mannose 6-phosphate targeting signal on lysosomal enzyme oligosaccharides by removing GlcNAc residues from GlcNAc-alpha-P-mannose moieties, which are formed in the first step. Also hydrolyzes UDP-GlcNAc, a sugar donor for Golgi N-acetylglucosaminyltransferases. The protein is N-acetylglucosamine-1-phosphodiester alpha-N-acetylglucosaminidase (NAGPA) of Homo sapiens (Human).